The chain runs to 644 residues: Leucine-rich repeat protein soc-2 homolog (644 aa).

Positions 1-19 (MNLCSSGATASTTSLSSTG) are enriched in low complexity. Disordered stretches follow at residues 1–60 (MNLC…APTL) and 82–150 (NSPA…IQAD). Gly residues-rich tracts occupy residues 26–50 (GVPGGGAEGGGGDGGSGNSGGGGKA) and 87–96 (GAGGASGFTG). The segment covering 99 to 117 (QQPTGSNGHSHLHNENNAN) has biased composition (polar residues). LRR repeat units follow at residues 164–185 (GIKRLDLSKSSITVIPSTVKEC), 187–208 (HLTELYLYSNKIGQLPPEIGCL), 210–231 (SLRNLALNENSLTSLPESLQNC), 233–254 (QLKVLDLRHNKLAEIPPVIYRL), 256–277 (SLTTLYLRFNRITAVADDLRQL), 279–300 (NLTMLSLRENKIRELGSAIGAL), 302–323 (NLTTLDVSHNHLEHLPEDIGNC), 325–346 (NLSALDLQHNELLDIPDSIGNL), 348–370 (SLVRLGMRYNRLNSVPATLKNCK), 371–392 (SMDEFNVEGNGITQLPDGMLAS), 395–416 (GLTTITLSRNQFASYPTGGPAQ), 419–440 (NVYSINLEHNRIDKIPYGIFSR), 443–464 (GLTKLNMKENMLTALPLDIGTW), 466–487 (NMVELNLATNALQKLPDDIMNL), 489–510 (NLEILILSNNMLKKIPNTIGNL), 512–533 (RLRILDLEENRIEVLPHEIGLL), 535–556 (ELQRLILQTNQITMLPRSIGHL), 558–579 (NLTHLSVSENNLQFLPEEIGSL), 581–603 (SLENLYINQNPGLEKLPFELALC), and 605–626 (NLKYLNIDKCPLSTIPPEIQAG).

Belongs to the SHOC2 family.

Acts as a Ras effector and participates in MAPK pathway activation. Probably acts as a regulatory subunit of protein phosphatase that specifically dephosphorylates Raf kinase and stimulate Raf activity at specialized signaling complexes upon Ras activation. This chain is Leucine-rich repeat protein soc-2 homolog (Sur-8), found in Drosophila erecta (Fruit fly).